Consider the following 131-residue polypeptide: Small ribosomal subunit protein uS8 (131 aa).

Belongs to the universal ribosomal protein uS8 family. Part of the 30S ribosomal subunit. Contacts proteins S5 and S12.

Functionally, one of the primary rRNA binding proteins, it binds directly to 16S rRNA central domain where it helps coordinate assembly of the platform of the 30S subunit. In Polaromonas naphthalenivorans (strain CJ2), this protein is Small ribosomal subunit protein uS8.